A 641-amino-acid chain; its full sequence is Threonine--tRNA ligase (641 aa).

The region spanning 1–61 (MPAITLPDGS…DDDVQLEIVT (61 aa)) is the TGS domain. Positions 242-533 (DHRRIGRAQN…LIEHYAGALP (292 aa)) are catalytic. Cys333, His384, and His510 together coordinate Zn(2+).

It belongs to the class-II aminoacyl-tRNA synthetase family. As to quaternary structure, homodimer. Requires Zn(2+) as cofactor.

Its subcellular location is the cytoplasm. The enzyme catalyses tRNA(Thr) + L-threonine + ATP = L-threonyl-tRNA(Thr) + AMP + diphosphate + H(+). Catalyzes the attachment of threonine to tRNA(Thr) in a two-step reaction: L-threonine is first activated by ATP to form Thr-AMP and then transferred to the acceptor end of tRNA(Thr). Also edits incorrectly charged L-seryl-tRNA(Thr). In Alkalilimnicola ehrlichii (strain ATCC BAA-1101 / DSM 17681 / MLHE-1), this protein is Threonine--tRNA ligase.